The following is a 104-amino-acid chain: N(4)-acetylcytidine amidohydrolase (104 aa).

The ASCH domain maps to 6 to 94; that stretch reads ITFFQRFQND…IAEIYPNQTQ (89 aa). The active-site Proton acceptor is the Lys-21. The active-site Nucleophile is the Thr-24. The active-site Proton donor is Glu-74.

Belongs to the N(4)-acetylcytidine amidohydrolase family.

The catalysed reaction is N(4)-acetylcytidine + H2O = cytidine + acetate + H(+). It catalyses the reaction N(4)-acetyl-2'-deoxycytidine + H2O = 2'-deoxycytidine + acetate + H(+). It carries out the reaction N(4)-acetylcytosine + H2O = cytosine + acetate + H(+). Catalyzes the hydrolysis of N(4)-acetylcytidine (ac4C). This Salmonella dublin (strain CT_02021853) protein is N(4)-acetylcytidine amidohydrolase (yqfB).